A 309-amino-acid polypeptide reads, in one-letter code: Ribosomal RNA small subunit methyltransferase H (309 aa).

S-adenosyl-L-methionine contacts are provided by residues 39–41 (GGH), Asp59, Phe83, Asp100, and Gln107.

The protein belongs to the methyltransferase superfamily. RsmH family.

It localises to the cytoplasm. The enzyme catalyses cytidine(1402) in 16S rRNA + S-adenosyl-L-methionine = N(4)-methylcytidine(1402) in 16S rRNA + S-adenosyl-L-homocysteine + H(+). Its function is as follows. Specifically methylates the N4 position of cytidine in position 1402 (C1402) of 16S rRNA. The polypeptide is Ribosomal RNA small subunit methyltransferase H (Delftia acidovorans (strain DSM 14801 / SPH-1)).